The sequence spans 462 residues: DNA polymerase delta subunit 3 (462 aa).

A2 is modified (N-acetylalanine). Disordered regions lie at residues 144-186 (APAE…ASQQ), 200-230 (TKTQ…PGKG), 254-384 (AVKE…RVLK), and 403-462 (SESC…FQKK). Over residues 156–174 (QSNLQAASEAQASELTTNG) the composition is skewed to polar residues. Over residues 204-215 (DTNKETKPEARE) the composition is skewed to basic and acidic residues. The segment covering 218 to 230 (SASSAGGKAPGKG) has biased composition (low complexity). K256 is covalently cross-linked (Glycyl lysine isopeptide (Lys-Gly) (interchain with G-Cter in SUMO); alternate). Residue K256 forms a Glycyl lysine isopeptide (Lys-Gly) (interchain with G-Cter in SUMO2); alternate linkage. K259 participates in a covalent cross-link: Glycyl lysine isopeptide (Lys-Gly) (interchain with G-Cter in SUMO2). A compositionally biased stretch (basic and acidic residues) spans 284 to 305 (RKSEPGKVQQKEKSSRGKRVDL). S306 carries the phosphoserine modification. A compositionally biased stretch (acidic residues) spans 330–344 (SSEDEVFEDSPEMYE). Residues 348-368 (PSPPPVSPPPDPMPKTEPPPV) show a composition bias toward pro residues. Residues S403 and S405 each carry the phosphoserine modification. The residue at position 407 (T407) is a Phosphothreonine. The residue at position 409 (S409) is a Phosphoserine. The span at 416-427 (KPASAHKPPAAA) shows a compositional bias: low complexity. Residues 428–437 (VKREPREERK) show a composition bias toward basic and acidic residues. A Glycyl lysine isopeptide (Lys-Gly) (interchain with G-Cter in SUMO); alternate cross-link involves residue K429. A Glycyl lysine isopeptide (Lys-Gly) (interchain with G-Cter in SUMO2); alternate cross-link involves residue K429. The segment covering 451-462 (RQVSITGFFQKK) has biased composition (polar residues). The short motif at 452-459 (QVSITGFF) is the PIP-box element. At S454 the chain carries Phosphoserine.

Component of both the DNA polymerase delta and DNA polymerase zeta complexes. The tetrameric DNA polymerase delta complex (Pol-delta4), which consists of POLD1/p125, POLD2/p50, POLD3/p66/p68 and POLD4/p12, with POLD1 bearing DNA polymerase and 3' to 5' proofreading exonuclease activities. Within this complex, directly interacts with POLD2. Following stress caused by DNA damaging agents or by replication stress, POLD4 is degraded and Pol-delta4 is converted into a trimeric form of the complex (Pol-delta3), which consists of POLD1, POLD2 and POLD3. Pol-delta3 is the major form occurring at S phase replication sites, as well as DNA damage sites. Directly interacts with PCNA, as do POLD1 and POLD4; this interaction stimulates Pol-delta polymerase activity. POLD3 phosphorylation at Ser-454 impairs PCNA binding. Component of the DNA polymerase zeta complex (POLZ), which consists of REV3L, MAD2L2, POLD2 and POLD3, with REV3L bearing DNA polymerase catalytic activity. The DNA polymerase delta complex interacts with POLDIP2; this interaction is probably mediated through direct binding to POLD2. In terms of processing, ubiquitinated, but not targeted to the proteasome. Sumoylated. Sumoylation by SUMO3 may be predominant. Phosphorylation at Ser-454 is thought to decrease the affinity for PCNA and Pol-delta4 processivity. May be phosphorylated by CDK1-cyclin-A complex, as well as CDK2-cyclin-A and CDK2-cyclin-E complexes. PCNA interferes with CDK-cyclin phosphorylation.

The protein resides in the cytoplasm. It localises to the nucleus. In terms of biological role, accessory component of both the DNA polymerase delta complex and the DNA polymerase zeta complex. As a component of the trimeric and tetrameric DNA polymerase delta complexes (Pol-delta3 and Pol-delta4, respectively), plays a role in high fidelity genome replication, including in lagging strand synthesis, and repair. Required for optimal Pol-delta activity. Stabilizes the Pol-delta complex and plays a major role in Pol-delta stimulation by PCNA. Pol-delta3 and Pol-delta4 are characterized by the absence or the presence of POLD4. They exhibit differences in catalytic activity. Most notably, Pol-delta3 shows higher proofreading activity than Pol-delta4. Although both Pol-delta3 and Pol-delta4 process Okazaki fragments in vitro, Pol-delta3 may also be better suited to fulfill this task, exhibiting near-absence of strand displacement activity compared to Pol-delta4 and stalling on encounter with the 5'-blocking oligonucleotides. Pol-delta3 idling process may avoid the formation of a gap, while maintaining a nick that can be readily ligated. Along with DNA polymerase kappa, DNA polymerase delta carries out approximately half of nucleotide excision repair (NER) synthesis following UV irradiation. In this context, POLD3, along with PCNA and RFC1-replication factor C complex, is required to recruit POLD1, the catalytic subunit of the polymerase delta complex, to DNA damage sites. Under conditions of DNA replication stress, required for the repair of broken replication forks through break-induced replication (BIR). Involved in the translesion synthesis (TLS) of templates carrying O6-methylguanine or abasic sites performed by Pol-delta4, independently of DNA polymerase zeta (REV3L) or eta (POLH). Facilitates abasic site bypass by DNA polymerase delta by promoting extension from the nucleotide inserted opposite the lesion. Also involved in TLS, as a component of the tetrameric DNA polymerase zeta complex. Along with POLD2, dramatically increases the efficiency and processivity of DNA synthesis of the DNA polymerase zeta complex compared to the minimal zeta complex, consisting of only REV3L and REV7. The protein is DNA polymerase delta subunit 3 (Pold3) of Mus musculus (Mouse).